A 286-amino-acid polypeptide reads, in one-letter code: MSDYLVKGMAGEFIRFTGVSSRQTVEEARKRHNLSRLATAALGRALTATIILASDLKNPGDLLTLRIFGDGPLGGIVCSAGNDGMVRGYLFNPEVELPLNDANKLDVGRGIGKGHLYVTKDLGLKEPYTGTVQLVSGEIAEDVAYYLYYSEQRPNVFNLGVLVNPDGSVAQAGGCLIEILPGAPEEIISTLEQNLGEQQSLTYQLQQGKHIEEIIQEVVNPYKTEIYVKKPVGFLCSCSREKLLPHLIGLYSEVKDEEIVEAVCHFCREKYTFSGKEIKEYKEKNT.

2 cysteine pairs are disulfide-bonded: C236/C238 and C264/C267.

It belongs to the HSP33 family. In terms of processing, under oxidizing conditions two disulfide bonds are formed involving the reactive cysteines. Under reducing conditions zinc is bound to the reactive cysteines and the protein is inactive.

It localises to the cytoplasm. Functionally, redox regulated molecular chaperone. Protects both thermally unfolding and oxidatively damaged proteins from irreversible aggregation. Plays an important role in the bacterial defense system toward oxidative stress. This Carboxydothermus hydrogenoformans (strain ATCC BAA-161 / DSM 6008 / Z-2901) protein is 33 kDa chaperonin.